The primary structure comprises 555 residues: GMP synthase [glutamine-hydrolyzing] (555 aa).

Residues 8-234 (KILVLNFGSQ…AYNICKCKKQ (227 aa)) form the Glutamine amidotransferase type-1 domain. Residue Cys89 is the Nucleophile; for GATase activity of the active site. Residues Gln93, Asn169, Asp172, and His208 each contribute to the L-glutamine site. Active-site for GATase activity residues include His208 and Glu210. The 196-residue stretch at 235–430 (FDPIRYHELE…LNLPEEITNR (196 aa)) folds into the GMPS ATP-PPase domain. Residue 262-268 (SGGIDST) coordinates ATP. XMP is bound by residues Arg336, Gln476, Lys547, Ile552, and Glu553.

In terms of assembly, homodimer (via the GMPS ATP-PPase domain). Mg(2+) is required as a cofactor.

It catalyses the reaction XMP + L-glutamine + ATP + H2O = GMP + L-glutamate + AMP + diphosphate + 2 H(+). It functions in the pathway purine metabolism; GMP biosynthesis; GMP from XMP (L-Gln route): step 1/1. Its activity is regulated as follows. The GATase domain is allosterically activated by the binding of substrates, ATP and XMP, to the ATPPase domain, thus ensuring that glutamine hydrolysis occurs only when the ATPPase domain is primed to receive ammonia. Inhibited by Na(+). Inhibited by the reaction product GMP. Catalyzes the conversion of xanthine monophosphate (XMP) to GMP in the presence of glutamine and ATP through an adenyl-XMP intermediate, which is the final step of de novo synthesis of GMP. The conversion of XMP to GMP involves the coordinated action of the glutamine amidotransferase (GATase) domain that catalyzes the hydrolysis of the amide side chain of glutamine producing ammonia and the ATP pyrophosphatase (ATPPase) domain that catalyzes the synthesis of adenyl-XMP intermediate from ATP. The ammonia produced by the GATase domain is tunnelled to the ATP-PPase domain where it attacks the adenyl-XMP intermediate generating GMP. This chain is GMP synthase [glutamine-hydrolyzing], found in Plasmodium falciparum (isolate 3D7).